Reading from the N-terminus, the 376-residue chain is MKILVDENMPYVEPLFGDLGDIIPVNGRTLTAEQVREADVLLVRSVTKVNAELLSGNNKLKFVGSATIGTDHVDLAYLAERNIPFSNAPGCNATAVGEFAFIAMLELAQRFNSPLKGKVVGIVGAGNTGTATAKCLQAYGIKVLLNDPIKAAEGDPRSFVSLDTIMAQADIISLHVPITHTGEHKTKHLFDEARLKALKPNTWLVNCCRGDVIDNQALIKVKQQRDDLKLVLDVWEGEPTPLPELVPLAEFATPHIAGYSLEGKARGTFMLYQNLCQLLNITADKSLLDLLPTFNIKAVELATAPNEKALLQLARFVYDLRDDDKMFRNTFLNENGFDTMRKNHQHRREFSALALAYDGQSEVDWLSNLGFSGVGQ.

The substrate site is built by Ser-45 and Thr-67. Asp-147 serves as a coordination point for NAD(+). The active site involves Arg-209. Asp-233 serves as a coordination point for NAD(+). Residue Glu-238 is part of the active site. The active-site Proton donor is the His-255. An NAD(+)-binding site is contributed by Gly-258. Residue Tyr-259 participates in substrate binding.

This sequence belongs to the D-isomer specific 2-hydroxyacid dehydrogenase family. PdxB subfamily. Homodimer.

The protein resides in the cytoplasm. The catalysed reaction is 4-phospho-D-erythronate + NAD(+) = (R)-3-hydroxy-2-oxo-4-phosphooxybutanoate + NADH + H(+). The protein operates within cofactor biosynthesis; pyridoxine 5'-phosphate biosynthesis; pyridoxine 5'-phosphate from D-erythrose 4-phosphate: step 2/5. Catalyzes the oxidation of erythronate-4-phosphate to 3-hydroxy-2-oxo-4-phosphonooxybutanoate. The polypeptide is Erythronate-4-phosphate dehydrogenase (Shewanella baltica (strain OS223)).